The sequence spans 855 residues: Mitofusin FZO1 (855 aa).

The span at 1–19 (MSEGKQQFKDSNKPHKDST) shows a compositional bias: basic and acidic residues. The interval 1-27 (MSEGKQQFKDSNKPHKDSTDQDDDAAT) is disordered. Over 1-705 (MSEGKQQFKD…PSLLFTSKIP (705 aa)) the chain is Cytoplasmic. The HRN stretch occupies residues 91-190 (NYNNNRVLLK…KRVDDVSSKV (100 aa)). In terms of domain architecture, Dynamin-type G spans 184-467 (DDVSSKVFIT…KKRSLSKLLP (284 aa)). Residues 197–202 (NTGKSA) and 370–373 (KKFD) each bind GTP. Lys-398 is covalently cross-linked (Glycyl lysine isopeptide (Lys-Gly) (interchain with G-Cter in ubiquitin)). A GTP-binding site is contributed by Ser-408. A compositionally biased stretch (basic and acidic residues) spans 413-433 (ELPHYHNENDNEDHGDRKPDD). A disordered region spans residues 413–447 (ELPHYHNENDNEDHGDRKPDDDPYSSSDPDPDFDS). A Glycyl lysine isopeptide (Lys-Gly) (interchain with G-Cter in ubiquitin) cross-link involves residue Lys-464. Residues 484–547 (KSNMKMYSEE…KEALLNALDV (64 aa)) are HR1. The segment at 630–843 (GKRLKVSLSI…QSLYEGTVAQ (214 aa)) is required for interaction with UGO1. A helical transmembrane segment spans residues 706–726 (TLTLYFLGSTKVVGNIILNGI). The Mitochondrial intermembrane segment spans residues 727-736 (KLSSWSSLKK). The helical transmembrane segment at 737–757 (LSVPVIVVGSLLGLTYLIHDL) threads the bilayer. Topologically, residues 758 to 855 (PRALPMNLSI…MVEEINLDID (98 aa)) are cytoplasmic. Residues 769–831 (YKRKLQELDY…KKESNLLSIK (63 aa)) form an HR2 region. The stretch at 798 to 825 (TREILRSCEIIMDKKQITKKELENKKES) forms a coiled coil.

It belongs to the TRAFAC class dynamin-like GTPase superfamily. Dynamin/Fzo/YdjA family. Mitofusin subfamily. As to quaternary structure, homodimer. Dimerization depends on GTP binding. Component of a large multiprotein complex of 800 kDa. Binds the cytoplasmic domain of UGO1 which binds MGM1 through its intermembrane space domain. Interacts with MDM30. Interacts with UBP2 and UBP12. Interacts (when ubiquitinated) with DOA1; the interaction recruits FZO1 to CDC48 and promotes FZO1 proteasomal degradation. In terms of processing, ubiquitinated at Lys-398 and Lys-464. MDM30 and UGO1 are involved in ubiquitination. Deubiquitinated by UBP2 and UBP12. UBP2 and UBP12 recognize distinct ubiquitin chains on FZO1 that have opposing effects on mitochondrial fusion. UBP2 removes ubiquitin chains that initiate proteolysis of FZO1 and inhibit fusion. UBP12 recognizes ubiquitin chains that stabilize FZO1 and promote mitochondrial fusion. UBP12 deubiquitylates FZO1 only after oligomerization.

Its subcellular location is the mitochondrion outer membrane. It catalyses the reaction GTP + H2O = GDP + phosphate + H(+). Functionally, essential transmembrane GTPase, which mediates mitochondrial fusion. Fusion proceeds through several steps; first mitochondria are tethered together, then brought into close contact, followed by the formation of a docking ring around contact areas, and finally membrane fusion. Fusion of mitochondria occurs in many cell types and constitutes an important step in mitochondrial morphology, which is balanced between fusion and fission, mediated by FZO1 and DNM1, respectively. Functions antagonistically with DNM1. Probably acts by forming membrane contact sites that mediate mitochondrial membrane fusion. Mitochondrial docking and fusion requires GTP hydrolysis. Mitochondrial fusion also promotes increased lifespan. This is Mitofusin FZO1 (FZO1) from Saccharomyces cerevisiae (strain ATCC 204508 / S288c) (Baker's yeast).